Consider the following 150-residue polypeptide: Arginine repressor (150 aa).

Belongs to the ArgR family.

It is found in the cytoplasm. Its pathway is amino-acid biosynthesis; L-arginine biosynthesis [regulation]. In terms of biological role, regulates arginine biosynthesis genes. In Clostridium acetobutylicum (strain ATCC 824 / DSM 792 / JCM 1419 / IAM 19013 / LMG 5710 / NBRC 13948 / NRRL B-527 / VKM B-1787 / 2291 / W), this protein is Arginine repressor.